Consider the following 268-residue polypeptide: 4-hydroxy-tetrahydrodipicolinate reductase (268 aa).

Residue 8–13 participates in NAD(+) binding; it reads GAAGRM. Residue R36 coordinates NADP(+). Residues 99 to 101 and 123 to 126 each bind NAD(+); these read GTT and AANF. H156 functions as the Proton donor/acceptor in the catalytic mechanism. Position 157 (H157) interacts with (S)-2,3,4,5-tetrahydrodipicolinate. The active-site Proton donor is the K160. 166–167 provides a ligand contact to (S)-2,3,4,5-tetrahydrodipicolinate; the sequence is GT.

It belongs to the DapB family.

The protein localises to the cytoplasm. It carries out the reaction (S)-2,3,4,5-tetrahydrodipicolinate + NAD(+) + H2O = (2S,4S)-4-hydroxy-2,3,4,5-tetrahydrodipicolinate + NADH + H(+). The catalysed reaction is (S)-2,3,4,5-tetrahydrodipicolinate + NADP(+) + H2O = (2S,4S)-4-hydroxy-2,3,4,5-tetrahydrodipicolinate + NADPH + H(+). It functions in the pathway amino-acid biosynthesis; L-lysine biosynthesis via DAP pathway; (S)-tetrahydrodipicolinate from L-aspartate: step 4/4. Catalyzes the conversion of 4-hydroxy-tetrahydrodipicolinate (HTPA) to tetrahydrodipicolinate. The sequence is that of 4-hydroxy-tetrahydrodipicolinate reductase from Pseudomonas fluorescens (strain Pf0-1).